Reading from the N-terminus, the 479-residue chain is MNTILAQQIANEGGVEAWMIAQQHKSLLRFLTCGSVDDGKSTLIGRLLHDTLQIYEDQLSSLHNDSKRHGTQGEKLDLALLVDGLQAEREQGITIDVAYRYFSTEKRKFIIADTPGHEQYTRNMATGASTCDLAILLIDARKGVLDQTRRHSFISTLLGIKHLVVAINKMDLVDYREETFARIREDYLTFAEQLPGDLDIRFVPLSALEGDNVAAQSANMRWYSGPTLLEVLETVDIQRAVDRQPMRFPVQYVNRPNLDFRGYAGTLASGSVKVGERIKVLPSGVESSVARIVTFDGDKEEACAGEAITLVLNDDIDISRGDLLLAANETLAPARHAAIDVVWMAEQPLAPGQSYDVKLAGKKTRARIEAIRYQIDINNLTQRDVESLPLNGIGLVEMTFDEPLALDIYQQNPVTGGLIFIDRLSNVTVGAGMVRELDERGATPPVEYSAFELELNALVRRHFPHWDARDLLGDKHGAA.

The tr-type G domain occupies 25-239 (KSLLRFLTCG…EVLETVDIQR (215 aa)). The segment at 34–41 (GSVDDGKS) is G1. 34 to 41 (GSVDDGKS) is a GTP binding site. The tract at residues 92-96 (GITID) is G2. The segment at 113–116 (DTPG) is G3. GTP is bound by residues 113-117 (DTPGH) and 168-171 (NKMD). The tract at residues 168-171 (NKMD) is G4. A G5 region spans residues 206-208 (SAL).

It belongs to the TRAFAC class translation factor GTPase superfamily. Classic translation factor GTPase family. CysN/NodQ subfamily. Heterodimer composed of CysD, the smaller subunit, and CysN.

It carries out the reaction sulfate + ATP + H(+) = adenosine 5'-phosphosulfate + diphosphate. Its pathway is sulfur metabolism; hydrogen sulfide biosynthesis; sulfite from sulfate: step 1/3. Functionally, with CysD forms the ATP sulfurylase (ATPS) that catalyzes the adenylation of sulfate producing adenosine 5'-phosphosulfate (APS) and diphosphate, the first enzymatic step in sulfur assimilation pathway. APS synthesis involves the formation of a high-energy phosphoric-sulfuric acid anhydride bond driven by GTP hydrolysis by CysN coupled to ATP hydrolysis by CysD. This is Sulfate adenylyltransferase subunit 1 from Salmonella dublin (strain CT_02021853).